Consider the following 125-residue polypeptide: Fluoride-specific ion channel FluC (125 aa).

A run of 4 helical transmembrane segments spans residues 1 to 21, 32 to 52, 68 to 88, and 101 to 121; these read MIQALLVAVGGAIGSLLRYYV, AFPWGTLAVNVVGCFVIGVFA, LLITGFLGGFTTFSAFSLDAI, and IYTVASVGLSMAAVMAGLAVM. Positions 75 and 78 each coordinate Na(+).

The protein belongs to the fluoride channel Fluc/FEX (TC 1.A.43) family.

Its subcellular location is the cell inner membrane. The catalysed reaction is fluoride(in) = fluoride(out). Its activity is regulated as follows. Na(+) is not transported, but it plays an essential structural role and its presence is essential for fluoride channel function. Its function is as follows. Fluoride-specific ion channel. Important for reducing fluoride concentration in the cell, thus reducing its toxicity. This chain is Fluoride-specific ion channel FluC, found in Rhizobium leguminosarum bv. trifolii (strain WSM2304).